A 278-amino-acid chain; its full sequence is Elongation factor Ts (278 aa).

An involved in Mg(2+) ion dislocation from EF-Tu region spans residues 79–82; sequence TDFV.

The protein belongs to the EF-Ts family.

It localises to the cytoplasm. Associates with the EF-Tu.GDP complex and induces the exchange of GDP to GTP. It remains bound to the aminoacyl-tRNA.EF-Tu.GTP complex up to the GTP hydrolysis stage on the ribosome. This chain is Elongation factor Ts, found in Borrelia hermsii (strain HS1 / DAH).